The primary structure comprises 511 residues: Cytochrome P450 monooxygenase roqR (511 aa).

The N-terminal stretch at 1-23 (MSGYVLLTVQLAAVLLLVTLWRA) is a signal peptide. 3 N-linked (GlcNAc...) asparagine glycosylation sites follow: Asn364, Asn373, and Asn383. A heme-binding site is contributed by Cys455.

The protein belongs to the cytochrome P450 family. Heme serves as cofactor.

The protein operates within alkaloid biosynthesis. In terms of biological role, cytochrome P450 monooxygenase; part of the gene cluster that mediates the biosynthesis of the mycotoxins roquefortine C and meleagrin. The first stage is catalyzed by the dipeptide synthase roqA which condenses histidine and tryptophan to produce histidyltryptophanyldiketopiperazine (HTD). HTD is then converted to roquefortine C through two possible pathways. In the first pathway, prenyltransferase roqD transforms HTD to the intermediate roquefortine D, which is in turn converted to roquefortine C by the cytochrome P450 monooxygenase roqR. In the second pathway, HTD is first converted to the intermediate dehydrohistidyltryptophanyldi-ketopiperazine (DHTD) by roqR which is then prenylated by roqD to form roquefortine C. Roquefortine C can be further transformed to meleagrin via three more reactions including oxydation to glandicolin A by roqM, which is further reduced to glandicoline B by roqO. Finally, glandicoline B is converted to meleagrin by the glandicoline B O-methyltransferase roqN. More studies identified further branching and additional metabolites produced by the roquefortine/meleagrin cluster, including roquefortine F, roquefortine L, roquefortine M, roquefortine N and neoxaline. This is Cytochrome P450 monooxygenase roqR from Penicillium rubens (strain ATCC 28089 / DSM 1075 / NRRL 1951 / Wisconsin 54-1255) (Penicillium chrysogenum).